The chain runs to 159 residues: Ribosomal RNA large subunit methyltransferase H (159 aa).

Residues G108 and 127 to 132 (FSKMTF) each bind S-adenosyl-L-methionine.

It belongs to the RNA methyltransferase RlmH family. Homodimer.

The protein resides in the cytoplasm. It catalyses the reaction pseudouridine(1915) in 23S rRNA + S-adenosyl-L-methionine = N(3)-methylpseudouridine(1915) in 23S rRNA + S-adenosyl-L-homocysteine + H(+). Its function is as follows. Specifically methylates the pseudouridine at position 1915 (m3Psi1915) in 23S rRNA. The protein is Ribosomal RNA large subunit methyltransferase H of Clostridium perfringens (strain ATCC 13124 / DSM 756 / JCM 1290 / NCIMB 6125 / NCTC 8237 / Type A).